The primary structure comprises 123 residues: Large ribosomal subunit protein uL29 (123 aa).

This sequence belongs to the universal ribosomal protein uL29 family. Component of the large ribosomal subunit.

The protein resides in the cytoplasm. Its function is as follows. Component of the large ribosomal subunit. The ribosome is a large ribonucleoprotein complex responsible for the synthesis of proteins in the cell. The polypeptide is Large ribosomal subunit protein uL29 (rpl35) (Ictalurus punctatus (Channel catfish)).